The primary structure comprises 458 residues: Alpha-glucosides-binding periplasmic protein AglE (458 aa).

Residues 1-27 (MKRSLLIGVAAFALLAGTAGLAGTAGA) form the signal peptide.

This sequence belongs to the bacterial solute-binding protein 1 family.

The protein resides in the periplasm. In terms of biological role, part of the binding-protein-dependent transport system for alpha-glucosides such as sucrose, maltose and trehalose. The chain is Alpha-glucosides-binding periplasmic protein AglE (aglE) from Rhizobium meliloti (strain 1021) (Ensifer meliloti).